The following is a 402-amino-acid chain: Nodulation protein E (402 aa).

In terms of domain architecture, Ketosynthase family 3 (KS3) spans 2-401 (DRRVVITGMG…GTNAVLAFKQ (400 aa)). Residues Cys-162, His-294, and His-331 each act as for beta-ketoacyl synthase activity in the active site. Residues 329–348 (HAHCIGAASALEMIACVMAI) traverse the membrane as a helical segment.

Belongs to the thiolase-like superfamily. Beta-ketoacyl-ACP synthases family.

It localises to the cell inner membrane. Its function is as follows. Proposed to synthesize NOD factor fatty acyl chain. Involved in the synthesis of a highly unsaturated fatty acid moiety, which forms part of a lipo-oligosaccharide that is responsible for host specificity. The polypeptide is Nodulation protein E (nodE) (Rhizobium meliloti (strain 1021) (Ensifer meliloti)).